A 73-amino-acid polypeptide reads, in one-letter code: MAKEELIEFGGVVSEALPDNRYRVTLENGVEIWAYASGKMQKHRIRILAGDRVTLEMSPYDLTKGRINFRHKS.

An S1-like domain is found at 1-72; the sequence is MAKEELIEFG…TKGRINFRHK (72 aa).

The protein belongs to the IF-1 family. In terms of assembly, component of the 30S ribosomal translation pre-initiation complex which assembles on the 30S ribosome in the order IF-2 and IF-3, IF-1 and N-formylmethionyl-tRNA(fMet); mRNA recruitment can occur at any time during PIC assembly.

Its subcellular location is the cytoplasm. Its function is as follows. One of the essential components for the initiation of protein synthesis. Stabilizes the binding of IF-2 and IF-3 on the 30S subunit to which N-formylmethionyl-tRNA(fMet) subsequently binds. Helps modulate mRNA selection, yielding the 30S pre-initiation complex (PIC). Upon addition of the 50S ribosomal subunit IF-1, IF-2 and IF-3 are released leaving the mature 70S translation initiation complex. In Cupriavidus metallidurans (strain ATCC 43123 / DSM 2839 / NBRC 102507 / CH34) (Ralstonia metallidurans), this protein is Translation initiation factor IF-1 1.